Here is a 397-residue protein sequence, read N- to C-terminus: Acetate kinase (397 aa).

Mg(2+) is bound at residue asparagine 8. Lysine 15 is an ATP binding site. Residue arginine 90 coordinates substrate. Aspartate 147 (proton donor/acceptor) is an active-site residue. ATP contacts are provided by residues 207–211 (HLGAG), 283–285 (DMR), and 330–334 (GVGEN). A Mg(2+)-binding site is contributed by glutamate 383.

Belongs to the acetokinase family. As to quaternary structure, homodimer. Mg(2+) serves as cofactor. It depends on Mn(2+) as a cofactor.

It localises to the cytoplasm. It catalyses the reaction acetate + ATP = acetyl phosphate + ADP. It functions in the pathway metabolic intermediate biosynthesis; acetyl-CoA biosynthesis; acetyl-CoA from acetate: step 1/2. In terms of biological role, catalyzes the formation of acetyl phosphate from acetate and ATP. Can also catalyze the reverse reaction. The protein is Acetate kinase of Fructilactobacillus sanfranciscensis (Lactobacillus sanfranciscensis).